The chain runs to 499 residues: Dipeptide and tripeptide permease A (499 aa).

At 1-34 (MSTANKKPAESVSMNAFKQPRSFYLIFSIELWER) the chain is on the cytoplasmic side. The helical transmembrane segment at 35-55 (FGFYGLQGIMAVYLVKQLGMS) threads the bilayer. Topologically, residues 56–59 (EADS) are periplasmic. A helical membrane pass occupies residues 60–80 (ITLFSSFSALVYGLVAIGGWL). The Cytoplasmic segment spans residues 81-89 (GDKVLGTKR). A helical membrane pass occupies residues 90–110 (VIMLGTIVLAIGYALVAWSGH). Position 111 (Asp-111) is a topological domain, periplasmic. Residues 112-132 (AAIVYFGMATIAVGNGLFKAN) form a helical membrane-spanning segment. Topologically, residues 133 to 153 (PSALLSTCYEKDDPRLDGAFT) are cytoplasmic. The chain crosses the membrane as a helical span at residues 154–174 (MYYMAINIGSFFSMLATPWLA). Topologically, residues 175-178 (EKFG) are periplasmic. The helical transmembrane segment at 179–199 (WSVAFSLSFVGMLITLVNFIF) threads the bilayer. The Cytoplasmic portion of the chain corresponds to 200–217 (CKKWVKDYGSKPDFAPLH). The chain crosses the membrane as a helical span at residues 218–238 (VGKLLATIVGIVVLVAIATWL). Residues 239–246 (LHNQGIAR) lie on the Periplasmic side of the membrane. Residues 247 to 267 (LVLGVVALGIVIIFAKEAFAM) traverse the membrane as a helical segment. At 268-274 (QGAARRK) the chain is on the cytoplasmic side. A helical membrane pass occupies residues 275 to 295 (MIVAFILMLEAIVFFVLYQQM). The Periplasmic portion of the chain corresponds to 296 to 320 (PTSLNFFAIRNVEHSILGIAFQPEQ). Residues 321–341 (FQALNPFWIMIGSPILAAIYN) form a helical membrane-spanning segment. Over 342–350 (KMGDRLPMP) the chain is Cytoplasmic. Residues 351–371 (FKFTIGMLLCSGAFLVLPLGA) form a helical membrane-spanning segment. The Periplasmic segment spans residues 372 to 383 (KFASEAGIVSVN). Residues 384–404 (WLILSYALQSIGELMISGLGL) traverse the membrane as a helical segment. Over 405–414 (AMVAQLVPQR) the chain is Cytoplasmic. The chain crosses the membrane as a helical span at residues 415–435 (LMGFIMGSWFLTTAGAAMIAG). The Periplasmic segment spans residues 436–459 (KVANLMAVPENVSDPLQSLEVYGR). A helical membrane pass occupies residues 460–480 (VFMQIGIATGVIAVLMLLTAP). Residues 481–499 (LLNRMTQEDKPKETDTAHA) are Cytoplasmic-facing.

This sequence belongs to the major facilitator superfamily. Proton-dependent oligopeptide transporter (POT/PTR) (TC 2.A.17) family. DtpA subfamily.

It is found in the cell inner membrane. Functionally, proton-dependent permease that transports di- and tripeptides. The chain is Dipeptide and tripeptide permease A from Cronobacter turicensis (strain DSM 18703 / CCUG 55852 / LMG 23827 / z3032).